A 186-amino-acid polypeptide reads, in one-letter code: Ribosome-recycling factor (186 aa).

The protein belongs to the RRF family.

The protein resides in the cytoplasm. Functionally, responsible for the release of ribosomes from messenger RNA at the termination of protein biosynthesis. May increase the efficiency of translation by recycling ribosomes from one round of translation to another. The chain is Ribosome-recycling factor from Rickettsia typhi (strain ATCC VR-144 / Wilmington).